The primary structure comprises 478 residues: MNSAVEQELAELGIEAYLSQHQHKSMLRFLTCGSVDDGKSTLIGRLLHDSKQIYADQLEAVHADSQRVGTTGERPDLALLVDGLQAEREQGITIDVAYRYFSTQKRKFIISDTPGHEQYTRNMATGASTCDVAVILIDARKGVLDQTRRHSYIANLLGIRHFVVAVNKMDLVDYSQSRFEEIKEEYVTFSKKLNNPNLDISILPLSALEGDNVVNHSAALAWYKGAPLLEVLEDIDIDADRGNGEFRFPVQYVNRPNLDFRGFSGSVSSGEIKVGDDIIALPSGKKSKVARIVTFDGDLPSAQAGQAVTLTLEDEIDISRGDLLVKSTSNLTATDQFKAEIVWMTEKGLQPGRQYDIKIAGKKTVGQIDAIHHQVNINSLETFVTDELPLNGIGLCDVSLTEVVSLDRYQDCADTGGFIFIDRLTNVTVGAGMIQNLSELSDVAPINDNVSAFEVELNALVRKHFPHWGAQDISKLLS.

In terms of domain architecture, tr-type G spans 24–240 (KSMLRFLTCG…VLEDIDIDAD (217 aa)). The interval 33–40 (GSVDDGKS) is G1. 33 to 40 (GSVDDGKS) lines the GTP pocket. Positions 91 to 95 (GITID) are G2. The G3 stretch occupies residues 112–115 (DTPG). Residues 112–116 (DTPGH) and 167–170 (NKMD) each bind GTP. Positions 167–170 (NKMD) are G4. Residues 206 to 208 (SAL) are G5.

The protein belongs to the TRAFAC class translation factor GTPase superfamily. Classic translation factor GTPase family. CysN/NodQ subfamily. Heterodimer composed of CysD, the smaller subunit, and CysN.

It catalyses the reaction sulfate + ATP + H(+) = adenosine 5'-phosphosulfate + diphosphate. The protein operates within sulfur metabolism; hydrogen sulfide biosynthesis; sulfite from sulfate: step 1/3. Its function is as follows. With CysD forms the ATP sulfurylase (ATPS) that catalyzes the adenylation of sulfate producing adenosine 5'-phosphosulfate (APS) and diphosphate, the first enzymatic step in sulfur assimilation pathway. APS synthesis involves the formation of a high-energy phosphoric-sulfuric acid anhydride bond driven by GTP hydrolysis by CysN coupled to ATP hydrolysis by CysD. This is Sulfate adenylyltransferase subunit 1 from Aliivibrio salmonicida (strain LFI1238) (Vibrio salmonicida (strain LFI1238)).